The chain runs to 579 residues: Arginine--tRNA ligase (579 aa).

The 'HIGH' region signature appears at 127 to 137 (PNLAKEMHVGH).

This sequence belongs to the class-I aminoacyl-tRNA synthetase family. Monomer.

It localises to the cytoplasm. The catalysed reaction is tRNA(Arg) + L-arginine + ATP = L-arginyl-tRNA(Arg) + AMP + diphosphate. This chain is Arginine--tRNA ligase, found in Azotobacter vinelandii (strain DJ / ATCC BAA-1303).